The following is a 111-amino-acid chain: Ribosome-binding factor A (111 aa).

It belongs to the RbfA family. Monomer. Binds 30S ribosomal subunits, but not 50S ribosomal subunits or 70S ribosomes.

It localises to the cytoplasm. One of several proteins that assist in the late maturation steps of the functional core of the 30S ribosomal subunit. Associates with free 30S ribosomal subunits (but not with 30S subunits that are part of 70S ribosomes or polysomes). Required for efficient processing of 16S rRNA. May interact with the 5'-terminal helix region of 16S rRNA. This chain is Ribosome-binding factor A, found in Helicobacter pylori (strain P12).